The following is a 123-amino-acid chain: Fluoride-specific ion channel FluC (123 aa).

Helical transmembrane passes span 4–24 (VYIA…SGWV), 31–51 (ALPY…GLLM), 64–83 (IRMG…STFS), and 100–120 (ANIL…IFLA). Na(+) contacts are provided by Gly74 and Thr77.

It belongs to the fluoride channel Fluc/FEX (TC 1.A.43) family.

The protein resides in the cell inner membrane. It catalyses the reaction fluoride(in) = fluoride(out). Its activity is regulated as follows. Na(+) is not transported, but it plays an essential structural role and its presence is essential for fluoride channel function. Its function is as follows. Fluoride-specific ion channel. Important for reducing fluoride concentration in the cell, thus reducing its toxicity. The sequence is that of Fluoride-specific ion channel FluC from Syntrophotalea carbinolica (strain DSM 2380 / NBRC 103641 / GraBd1) (Pelobacter carbinolicus).